The following is a 446-amino-acid chain: Zinc finger protein BALDIBIS (446 aa).

The disordered stretch occupies residues 20–53; it reads EHIAPNPNPNPNPTSSNSAKRKRNLPGNPDPDAE. S58 bears the Phosphoserine mark. C2H2-type zinc fingers lie at residues 68–90 and 110–140; these read FICE…RRGH and YICP…SRKH. Residues 132–139 carry the Nuclear localization signal motif; sequence IKKHFSRK. Residues 145 to 168 form a C2H2-type 2; degenerate zinc finger; the sequence is WKCDKCSKKYAVMSDWKAHSKICG. Zn(2+) contacts are provided by C147, C150, H163, C167, C174, C176, H189, and C193. The segment at 172–195 adopts a CCHC-type 2; atypical zinc-finger fold; that stretch reads YRCDCGTLFSRKDSFITHRAFCDA. Positions 182 to 194 are SHR-binding; that stretch reads RKDSFITHRAFCD. The disordered stretch occupies residues 425–446; the sequence is HNLPDSSPPASTDGTPTADMNQ. Residues 427–446 show a composition bias toward polar residues; sequence LPDSSPPASTDGTPTADMNQ.

In terms of assembly, binds to RGA and SCL3 competitively in the nucleus. In terms of tissue distribution, expressed in roots, especially in vascular initials, cortex, endodermis, and quiescent center (QC).

The protein resides in the nucleus. Functionally, transcription factor that, together with JKD, regulates tissue boundaries and asymmetric cell division in roots by a rapid up-regulation of 'SCARECROW' (SCR), thus controlling the nuclear localization of 'SHORT-ROOT' (SHR) and restricting its action. Confines CYCD6 expression to the cortex-endodermis initial/daughter (CEI/CEID) tissues. Binds DNA via its zinc fingers. Recognizes and binds to SCL3 promoter sequence 5'-AGACAA-3' to promote its expression when in complex with RGA. The polypeptide is Zinc finger protein BALDIBIS (Arabidopsis thaliana (Mouse-ear cress)).